A 78-amino-acid chain; its full sequence is Small ribosomal subunit protein bS18 (78 aa).

Belongs to the bacterial ribosomal protein bS18 family. As to quaternary structure, part of the 30S ribosomal subunit. Forms a tight heterodimer with protein bS6.

Its function is as follows. Binds as a heterodimer with protein bS6 to the central domain of the 16S rRNA, where it helps stabilize the platform of the 30S subunit. The polypeptide is Small ribosomal subunit protein bS18 (Alkaliphilus oremlandii (strain OhILAs) (Clostridium oremlandii (strain OhILAs))).